Reading from the N-terminus, the 396-residue chain is Lipid-A-disaccharide synthase (396 aa).

Belongs to the LpxB family.

It catalyses the reaction a lipid X + a UDP-2-N,3-O-bis[(3R)-3-hydroxyacyl]-alpha-D-glucosamine = a lipid A disaccharide + UDP + H(+). Its pathway is bacterial outer membrane biogenesis; LPS lipid A biosynthesis. Condensation of UDP-2,3-diacylglucosamine and 2,3-diacylglucosamine-1-phosphate to form lipid A disaccharide, a precursor of lipid A, a phosphorylated glycolipid that anchors the lipopolysaccharide to the outer membrane of the cell. This is Lipid-A-disaccharide synthase from Nitrobacter winogradskyi (strain ATCC 25391 / DSM 10237 / CIP 104748 / NCIMB 11846 / Nb-255).